We begin with the raw amino-acid sequence, 412 residues long: Alpha-1-antiproteinase (412 aa).

Residues 1–24 (MTPSISWGLLLLAGLFCLVPSFLA) form the signal peptide. Ser-33 bears the Phosphoserine mark. N-linked (GlcNAc...) asparagine glycosylation is found at Asn-100, Asn-133, Asn-264, and Asn-313. The tract at residues 367–386 (AATVLQAVPMSMPPILNFNK) is RCL. Ser-377 carries the phosphoserine modification.

The protein belongs to the serpin family. As to quaternary structure, interacts with CELA2A. Interacts with ERGIC3 and LMAN1/ERGIC53. Interacts with PRSS1/Trypsin. As to expression, expressed not only in liver but also in kidney tubule cells, where it is regulated by androgens during development.

The protein resides in the secreted. In terms of biological role, inhibitor of serine proteases. Its primary target is elastase, but it also has a moderate affinity for plasmin and thrombin. The protein is Alpha-1-antiproteinase (Serpina1) of Mus caroli (Ryukyu mouse).